We begin with the raw amino-acid sequence, 131 residues long: Aspartate 1-decarboxylase (131 aa).

S25 (schiff-base intermediate with substrate; via pyruvic acid) is an active-site residue. S25 bears the Pyruvic acid (Ser) mark. Residue T57 participates in substrate binding. The active-site Proton donor is Y58. 73–75 (GAA) contributes to the substrate binding site.

It belongs to the PanD family. As to quaternary structure, heterooctamer of four alpha and four beta subunits. It depends on pyruvate as a cofactor. Post-translationally, is synthesized initially as an inactive proenzyme, which is activated by self-cleavage at a specific serine bond to produce a beta-subunit with a hydroxyl group at its C-terminus and an alpha-subunit with a pyruvoyl group at its N-terminus.

It is found in the cytoplasm. It carries out the reaction L-aspartate + H(+) = beta-alanine + CO2. It functions in the pathway cofactor biosynthesis; (R)-pantothenate biosynthesis; beta-alanine from L-aspartate: step 1/1. Functionally, catalyzes the pyruvoyl-dependent decarboxylation of aspartate to produce beta-alanine. The protein is Aspartate 1-decarboxylase of Anaeromyxobacter sp. (strain K).